The following is a 657-amino-acid chain: PAN2-PAN3 deadenylation complex subunit PAN3 (657 aa).

Disordered stretches follow at residues 1–29 (MASA…HAKD), 52–98 (HDPS…SATI), and 115–135 (SRSN…EWSI). The C3H1-type zinc finger occupies 27–55 (AKDTLCRNVTIYGRCRYEDKGCVFNHDPS). Over residues 52 to 67 (HDPSRVNDAQHPERSS) the composition is skewed to basic and acidic residues. 2 stretches are compositionally biased toward polar residues: residues 75 to 98 (DSPS…SATI) and 115 to 132 (SRSN…STPE). The interval 259–521 (QTLPNSQLPT…TIDIFISGIS (263 aa)) is pseudokinase domain. ATP-binding positions include Arg-311, 360 to 367 (DYHPLSKT), and 421 to 422 (SK). Residues 522-560 (SQLMSTFDSSLHLDDQLISDLSRELENARLVRLLTKLNF) adopt a coiled-coil conformation. Residues 561–657 (INERPEYEHD…QALLKPARRI (97 aa)) form a knob domain region.

It belongs to the protein kinase superfamily. PAN3 family. In terms of assembly, homodimer. Forms a heterotrimer with a catalytic subunit PAN2 to form the poly(A)-nuclease (PAN) deadenylation complex. Interacts (via PAM-2 motif) with poly(A)-binding protein PAB1 (via PABC domain), conferring substrate specificity of the enzyme complex.

It localises to the cytoplasm. Its function is as follows. Regulatory subunit of the poly(A)-nuclease (PAN) deadenylation complex, one of two cytoplasmic mRNA deadenylases involved in mRNA turnover. PAN specifically shortens poly(A) tails of RNA and the activity is stimulated by poly(A)-binding protein PAB1. PAN deadenylation is followed by rapid degradation of the shortened mRNA tails by the CCR4-NOT complex. Deadenylated mRNAs are then degraded by two alternative mechanisms, namely exosome-mediated 3'-5' exonucleolytic degradation, or deadenylation-dependent mRNA decaping and subsequent 5'-3' exonucleolytic degradation by XRN1. May also be involved in post-transcriptional maturation of mRNA poly(A) tails. PAN3 acts as a positive regulator for PAN activity, recruiting the catalytic subunit PAN2 to mRNA via its interaction with RNA and with PAB1. In Coccidioides immitis (strain RS) (Valley fever fungus), this protein is PAN2-PAN3 deadenylation complex subunit PAN3.